Reading from the N-terminus, the 595-residue chain is MTMTLHTKASGMALLHQIQGNELETLNRPQLKIPLERPLGEVYVDGSKPAVYNYPEGAAYDFNAAAAASAPVYGQSGLAYGSGSEAAAFGANGLGGFPPLNSVSPSPLVLLHPPPQLSPFLHPHGQQVPYYLENEPSGYAVREAGPPAFYRPTSDNRRQSGRERLASTGDKGSMAMESAKETRYCAVCNDYASGYHYGVWSCEGCKAFFKRSIQGHNDYMCPATNQCTIDKNRRKSCQACRLRKCYEVGMMKGGIRKDRRGGRMLKHKRQRDEGEGRNEVGSSGDVRASNLWPSPLLIKHTKKNSPALSLTADQMVSALLEAEPPIIYSDYDPSRPFSEASMMGLLTNLADRELVHMINWAKRVPGFVDLSLHDQVHLLECAWLEILMIGLVWRSMEHPGKLLFAPNLLLDRNQGKCVEGMVEIFDMLLATSSRFRMMNLQGEEFVCLKSIILLNSGVYTFLSSTLKSLEEKDHIHRVLDKITDTLIHLMAKAGLSLQQQHRRLAQLLLILSHIRHMSNKGMEHLYNMKCKNVVPLYDLLLEMLDAHRLHAPANRGGAPMEEMNQSQLATTGSTSAHSLQAYYITEEAGAFPTTV.

Residues 1 to 184 (MTMTLHTKAS…AMESAKETRY (184 aa)) are modulating (transactivation AF-1); mediates interaction with MACROD1. O-linked (GlcNAc) serine glycosylation occurs at Ser10. A required for interaction with NCOA1 region spans residues 35-47 (LERPLGEVYVDGS). An interaction with DDX5; self-association region spans residues 35–174 (LERPLGEVYV…LASTGDKGSM (140 aa)). 2 positions are modified to phosphoserine; by CDK2: Ser104 and Ser106. Ser118 bears the Phosphoserine mark. The tract at residues 149–173 (FYRPTSDNRRQSGRERLASTGDKGS) is disordered. The segment covering 154 to 165 (SDNRRQSGRERL) has biased composition (basic and acidic residues). Ser167 bears the Phosphoserine; by CK2 mark. NR C4-type zinc fingers lie at residues 185–205 (CAVCNDYASGYHYGVWSCEGC) and 221–245 (CPATNQCTIDKNRRKSCQACRLRKC). A DNA-binding region (nuclear receptor) is located at residues 185–250 (CAVCNDYASG…RLRKCYEVGM (66 aa)). The segment at 185 to 310 (CAVCNDYASG…TKKNSPALSL (126 aa)) is mediates interaction with DNTTIP2. A hinge region spans residues 251 to 310 (MKGGIRKDRRGGRMLKHKRQRDEGEGRNEVGSSGDVRASNLWPSPLLIKHTKKNSPALSL). Over residues 257–269 (KDRRGGRMLKHKR) the composition is skewed to basic residues. The segment at 257-287 (KDRRGGRMLKHKRQRDEGEGRNEVGSSGDVR) is disordered. Arg260 is modified (asymmetric dimethylarginine; by PRMT1). Residues 262–595 (GRMLKHKRQR…EEAGAFPTTV (334 aa)) are interaction with AKAP13. Residues 264 to 595 (MLKHKRQRDE…EEAGAFPTTV (332 aa)) form a self-association region. The NR LBD domain maps to 311 to 547 (TADQMVSALL…DLLLEMLDAH (237 aa)). A transactivation AF-2 region spans residues 311–595 (TADQMVSALL…EEAGAFPTTV (285 aa)). Positions 353 and 394 each coordinate 17beta-estradiol. Cys447 carries S-palmitoyl cysteine lipidation. His524 is a binding site for 17beta-estradiol. Tyr537 bears the Phosphotyrosine; by Tyr-kinases mark. Thr571 carries an O-linked (GlcNAc) threonine glycan.

The protein belongs to the nuclear hormone receptor family. NR3 subfamily. As to quaternary structure, binds DNA as a homodimer. Can form a heterodimer with ESR2. Interacts with coactivator NCOA5. Interacts with PELP1, the interaction is enhanced by 17-beta-estradiol; the interaction increases ESR1 transcriptional activity. Interacts with NCOA7; the interaction is ligand-inducible. Interacts with AKAP13, CUEDC2, HEXIM1, KDM5A, MAP1S, SMARD1, and UBE1C. Interacts with MUC1; the interaction is stimulated by 7 beta-estradiol (E2) and enhances ESR1-mediated transcription. Interacts with DNTTIP2, and UIMC1. Interacts with KMT2D/MLL2. Interacts with ATAD2; the interaction is enhanced by estradiol. Interacts with KIF18A and LDB1. Interacts with RLIM (via its C-terminus). Interacts with MACROD1. Interacts with SH2D4A and PLCG. Interacts with SH2D4A; the interaction blocks binding to PLCG and inhibits estrogen-induced cell proliferation. Interacts with DYNLL1. Interacts with CCDC62; the interaction requires estradiol and appears to enhance the transcription of target genes. Interacts with NR2C1; the interaction prevents homodimerization of ESR1 and suppresses its transcriptional activity and cell growth. Interacts with DNAAF4. Interacts with PRMT2. Interacts with RBFOX2. Interacts with EP300; the interaction is estrogen-dependent and enhanced by CITED1. Interacts with CITED1; the interaction is estrogen-dependent. Interacts with FAM120B, FOXL2, PHB2 and SLC30A9. Interacts with coactivators NCOA3 and NCOA6. Interacts with STK3/MST2 only in the presence of SAV1 and vice-versa. Binds to CSNK1D. Interacts with NCOA2; NCOA2 can interact with ESR1 AF-1 and AF-2 domains simultaneously and mediate their transcriptional synergy. Interacts with DDX5. Interacts with NCOA1; the interaction seems to require a self-association of N-terminal and C-terminal regions. Interacts with ZNF366, DDX17, NFKB1, RELA, SP1 and SP3. Interacts with NRIP1. Interacts with GPER1; the interaction occurs in an estrogen-dependent manner. Interacts with CLOCK and the interaction is stimulated by estrogen. Interacts with TRIP4 (ufmylated); estrogen dependent. Interacts with LMTK3; the interaction phosphorylates ESR1 (in vitro) and protects it against proteasomal degradation. Interacts with CCAR2 (via N-terminus) in a ligand-independent manner. Interacts with ZFHX3. Interacts with SFR1 in a ligand-dependent and -independent manner. Interacts with DCAF13, LATS1 and DCAF1; regulates ESR1 ubiquitination and ubiquitin-mediated proteasomal degradation. Interacts (via DNA-binding domain) with POU4F2 (C-terminus); this interaction increases the estrogen receptor ESR1 transcriptional activity in a DNA- and ligand 17-beta-estradiol-independent manner. Interacts with ESRRB isoform 1. Interacts with UBE3A and WBP2. Interacts with GTF2B. Interacts with RBM39. In the absence of hormonal ligand, interacts with TACC1. Interacts with PI3KR1 or PI3KR2 and PTK2/FAK1. Interacts with SRC. Interacts with BAG1; the interaction is promoted in the absence of estradiol (17-beta-estradiol/E2). Interacts with and ubiquitinated by STUB1; the interaction is promoted in the absence of estradiol (17-beta-estradiol/E2). Interacts with NEDD8. In terms of processing, ubiquitinated; regulated by LATS1 via DCAF1 it leads to ESR1 proteasomal degradation. Deubiquitinated by OTUB1. Ubiquitinated by STUB1/CHIP; in the CA1 hippocampal region following loss of endogenous circulating estradiol (17-beta-estradiol/E2). Ubiquitinated by UBR5, leading to its degradation: UBR5 specifically recognizes and binds ligand-bound ESR1 when it is not associated with coactivators (NCOAs). In presence of NCOAs, the UBR5-degron is not accessible, preventing its ubiquitination and degradation. Phosphorylated by cyclin A/CDK2 and CK1. Phosphorylation probably enhances transcriptional activity. Dephosphorylation at Ser-118 by PPP5C inhibits its transactivation activity. Phosphorylated by LMTK3 (in vitro). Post-translationally, palmitoylated at Cys-447 by ZDHHC7 and ZDHHC21. Palmitoylation is required for plasma membrane targeting and for rapid intracellular signaling via ERK and AKT kinases and cAMP generation, but not for signaling mediated by the nuclear hormone receptor. In terms of processing, dimethylated by PRMT1 at Arg-260. The methylation may favor cytoplasmic localization. Demethylated by JMJD6 at Arg-260.

Its subcellular location is the nucleus. It localises to the cytoplasm. The protein localises to the golgi apparatus. The protein resides in the cell membrane. Nuclear hormone receptor. The steroid hormones and their receptors are involved in the regulation of eukaryotic gene expression and affect cellular proliferation and differentiation in target tissues. Ligand-dependent nuclear transactivation involves either direct homodimer binding to a palindromic estrogen response element (ERE) sequence or association with other DNA-binding transcription factors, such as AP-1/c-Jun, c-Fos, ATF-2, Sp1 and Sp3, to mediate ERE-independent signaling. Ligand binding induces a conformational change allowing subsequent or combinatorial association with multiprotein coactivator complexes through LXXLL motifs of their respective components. Mutual transrepression occurs between the estrogen receptor (ER) and NF-kappa-B in a cell-type specific manner. Decreases NF-kappa-B DNA-binding activity and inhibits NF-kappa-B-mediated transcription from the IL6 promoter and displace RELA/p65 and associated coregulators from the promoter. Recruited to the NF-kappa-B response element of the CCL2 and IL8 promoters and can displace CREBBP. Present with NF-kappa-B components RELA/p65 and NFKB1/p50 on ERE sequences. Can also act synergistically with NF-kappa-B to activate transcription involving respective recruitment adjacent response elements; the function involves CREBBP. Can activate the transcriptional activity of TFF1. Also mediates membrane-initiated estrogen signaling involving various kinase cascades. Essential for MTA1-mediated transcriptional regulation of BRCA1 and BCAS3. Maintains neuronal survival in response to ischemic reperfusion injury when in the presence of circulating estradiol (17-beta-estradiol/E2). The sequence is that of Estrogen receptor (ESR1) from Felis catus (Cat).